A 211-amino-acid polypeptide reads, in one-letter code: uncharacterized protein (211 aa).

Residues 1-43 form a disordered region; that stretch reads MRPEVGREPAALQPRQRPRSDHQLHRSPFTVPPRTPACRSPGP.

This is an uncharacterized protein from Homo sapiens (Human).